Here is a 529-residue protein sequence, read N- to C-terminus: Protein PNS1 (529 aa).

Residues 1-58 (MSQQYSYGGGGGAGYPPPQMQPPNSYAQANYQGQPQGAQNQYYNGQQPHHNAPQQYYG) are disordered. Over 1-84 (MSQQYSYGGG…LQPKPKFRDP (84 aa)) the chain is Cytoplasmic. Over residues 22-48 (PPNSYAQANYQGQPQGAQNQYYNGQQP) the composition is skewed to low complexity. Residues 85–105 (IFLVLFLLVFAGFIALSVICL) form a helical membrane-spanning segment. Over 106–132 (RSYSNADVNVSIGRANVAGSTLNGHTA) the chain is Extracellular. The N-linked (GlcNAc...) asparagine glycan is linked to Asn-114. Residues 133 to 153 (IMFMICCAVALVLSFVYILLV) form a helical membrane-spanning segment. The Cytoplasmic portion of the chain corresponds to 154 to 158 (RTFPK). A helical membrane pass occupies residues 159–179 (IILEATLLLTTLSNVAFCVYL). At 180–184 (WVRGN) the chain is on the extracellular side. A helical membrane pass occupies residues 185-205 (TAAAIIFTIFAVLSVIAYFFM). Over 206–230 (RKRIPLAKLILVTVIRTAEQYKSVY) the chain is Cytoplasmic. Residues 231-251 (VVALGGLIVETAFSAWTSWVV) traverse the membrane as a helical segment. Residues 252-271 (VAAYQRFEPSGQAAGSSSSN) lie on the Extracellular side of the membrane. Asn-271 carries N-linked (GlcNAc...) asparagine glycosylation. The chain crosses the membrane as a helical span at residues 272–292 (ASIIGIMVFIVFAYYWISEVI). At 293-294 (KN) the chain is on the cytoplasmic side. A helical transmembrane segment spans residues 295–315 (IAFTTVAGIFGVAYYNANKVA). Residues 316–325 (NAAWGAFRRS) are Extracellular-facing. The helical transmembrane segment at 326–346 (MTYSLGSICFGSLIVAILDLL) threads the bilayer. At 347-362 (RALFNILQSQAASDGD) the chain is on the cytoplasmic side. The helical transmembrane segment at 363 to 383 (MTGQILACVAGCCVSCIQGLV) threads the bilayer. At 384–427 (DYFNRYAYINIALYGNGYITAAKETWALLKDRGIDAIINDSLVN) the chain is on the extracellular side. N-linked (GlcNAc...) asparagine glycosylation is present at Asn-422. Residues 428–448 (IVFNCGAFIIGLLTALFAFIY) form a helical membrane-spanning segment. The Cytoplasmic portion of the chain corresponds to 449–464 (EQLTNPRYLQNDAGYY). Residues 465–485 (SIVLLVAFGLGFNIALSVGAG) form a helical membrane-spanning segment. The Extracellular segment spans residues 486-529 (SIASGVSTYFVALAEDPYILQGKNPELFEMIRQQYPQVVQGVNH).

Belongs to the CTL (choline transporter-like) family.

It localises to the cell membrane. Its function is as follows. Probably involved in transport through the plasma membrane. This Mycosarcoma maydis (Corn smut fungus) protein is Protein PNS1 (PNS1).